Reading from the N-terminus, the 212-residue chain is Prolactin (212 aa).

A signal peptide spans 1-24 (MAHRETNGSKLFITVLCMVAACSA). Intrachain disulfides connect Cys70-Cys185 and Cys202-Cys212.

Belongs to the somatotropin/prolactin family.

The protein resides in the secreted. This chain is Prolactin (prl), found in Sparus aurata (Gilthead sea bream).